The chain runs to 151 residues: MSTAARRRLMRDFKRMQTDPPAGVSASPVPDNVMTWNAVIIGPADTPFEDGTFRLVMQFEEQYPNKPPQVKFISEMFHPNVYATGELCLDILQNRWSPTYDVAAVLTSIQSLLNDPNTGSPANVEASNLYKDNRKEYTKRVRETVEKSWED.

One can recognise a UBC core domain in the interval 4 to 150 (AARRRLMRDF…VRETVEKSWE (147 aa)). The Glycyl thioester intermediate role is filled by cysteine 88.

It belongs to the ubiquitin-conjugating enzyme family.

It is found in the cytoplasm. The protein localises to the nucleus. The catalysed reaction is S-ubiquitinyl-[E1 ubiquitin-activating enzyme]-L-cysteine + [E2 ubiquitin-conjugating enzyme]-L-cysteine = [E1 ubiquitin-activating enzyme]-L-cysteine + S-ubiquitinyl-[E2 ubiquitin-conjugating enzyme]-L-cysteine.. Its pathway is protein modification; protein ubiquitination. Catalyzes the covalent attachment of ubiquitin to other proteins. Plays a role in transcription regulation by catalyzing the monoubiquitination of histone H2B to form H2BK123ub1. H2BK123ub1 gives a specific tag for epigenetic transcriptional activation and is also a prerequisite for H3K4me and H3K79me formation. Also involved in postreplication repair of UV-damaged DNA, in N-end rule-dependent protein degradation and in sporulation. In Fusarium solani (Filamentous fungus), this protein is Ubiquitin-conjugating enzyme E2 2 (UBC2).